The chain runs to 48 residues: Large ribosomal subunit protein eL40 (48 aa).

This sequence belongs to the eukaryotic ribosomal protein eL40 family.

This Methanosphaerula palustris (strain ATCC BAA-1556 / DSM 19958 / E1-9c) protein is Large ribosomal subunit protein eL40.